A 393-amino-acid chain; its full sequence is MNVTTTRKDLMIVNMGPHHPSMHGVLRLILTLDGEDVIDCEPILGYLHRGMEKIAENRTVIQYLPYVTRWDYLATMFTEAITINGPEQLGNIQVPKRASYIRIIMLELSRIASHLLWLGPFMADIGAQTPFFYIFRERELVYDLFEAATGMRMMHNYFRIGGVAADLPYGWIDKCLDFCDYFLTAVSEYQKLITRNPIFLERVEGVGIIGGEEAINWGLSGPMLRASGIEWDLRKVDRYECYGELDWEIRWQKEGDSLARYLVRMSEMTESIKIIQQALEGIPGGPYENLEIRCFDIEKDPEWDGFEYRFISKKPSPTFELPKQELYVRVEAPKGELGIFLIGDQSGFPWRWKIRPPGFINLQILPQLVKRMKLADIMTILGSIDIIMGEVDR.

This sequence belongs to the complex I 49 kDa subunit family. In terms of assembly, NDH is composed of at least 16 different subunits, 5 of which are encoded in the nucleus.

Its subcellular location is the plastid. It localises to the chloroplast thylakoid membrane. The enzyme catalyses a plastoquinone + NADH + (n+1) H(+)(in) = a plastoquinol + NAD(+) + n H(+)(out). It carries out the reaction a plastoquinone + NADPH + (n+1) H(+)(in) = a plastoquinol + NADP(+) + n H(+)(out). Its function is as follows. NDH shuttles electrons from NAD(P)H:plastoquinone, via FMN and iron-sulfur (Fe-S) centers, to quinones in the photosynthetic chain and possibly in a chloroplast respiratory chain. The immediate electron acceptor for the enzyme in this species is believed to be plastoquinone. Couples the redox reaction to proton translocation, and thus conserves the redox energy in a proton gradient. The polypeptide is NAD(P)H-quinone oxidoreductase subunit H, chloroplastic (Oenothera argillicola (Appalachian evening primrose)).